Reading from the N-terminus, the 33-residue chain is Pheromone biosynthesis-activating neuropeptide (33 aa).

The tract at residues 1-33 (LADDMPATMADQEVYRPEPEQIDSRNKYFSPRL) is disordered. A compositionally biased stretch (basic and acidic residues) spans 13-26 (EVYRPEPEQIDSRN). L33 is modified (leucine amide).

This sequence belongs to the pyrokinin family.

Its subcellular location is the secreted. Its function is as follows. Involved in the control of pheromone production in females. The chain is Pheromone biosynthesis-activating neuropeptide from Lymantria dispar (Gypsy moth).